A 306-amino-acid polypeptide reads, in one-letter code: tRNA pseudouridine synthase B (306 aa).

D43 functions as the Nucleophile in the catalytic mechanism.

It belongs to the pseudouridine synthase TruB family. Type 1 subfamily.

It carries out the reaction uridine(55) in tRNA = pseudouridine(55) in tRNA. Its function is as follows. Responsible for synthesis of pseudouridine from uracil-55 in the psi GC loop of transfer RNAs. This chain is tRNA pseudouridine synthase B, found in Syntrophobacter fumaroxidans (strain DSM 10017 / MPOB).